We begin with the raw amino-acid sequence, 1081 residues long: Disheveled-associated activator of morphogenesis 1-A (1081 aa).

The region spanning leucine 45–glutamine 418 is the GBD/FH3 domain. 2 disordered regions span residues lysine 455 to glutamine 476 and arginine 519 to serine 615. Positions proline 526–proline 536 are enriched in pro residues. The span at glycine 538–phenylalanine 547 shows a compositional bias: low complexity. Residues methionine 548–leucine 585 show a composition bias toward pro residues. A compositionally biased stretch (low complexity) spans proline 586–serine 600. Residues lysine 603–glutamine 1012 enclose the FH2 domain. The interval alanine 696–arginine 705 is actin-binding. Residues leucine 1013–asparagine 1029 are compositionally biased toward basic and acidic residues. Disordered regions lie at residues leucine 1013–aspartate 1038 and arginine 1060–tyrosine 1081. The DAD domain occupies glycine 1030–lysine 1061. Basic and acidic residues predominate over residues serine 1070 to tyrosine 1081.

It localises to the cytoplasm. The protein resides in the cytoskeleton. It is found in the cilium basal body. Its function is as follows. Binds to disheveled (dsh) and Rho, and mediates Wnt-induced dsh-Rho complex formation during gastrulation. May play a role as a scaffolding protein to recruit Rho-GDP and Rho-GEF, thereby enhancing Rho-GTP formation. Can direct nucleation and elongation of new actin filaments. Involved in building functional cilia. Involved in building functional cilia. Involved in the organization of the subapical actin network in multiciliated epithelial cells. The chain is Disheveled-associated activator of morphogenesis 1-A (daam1-a) from Xenopus laevis (African clawed frog).